Reading from the N-terminus, the 299-residue chain is GTPase Era (299 aa).

Residues 4–171 (KSGFVAILGR…VDILSENLDE (168 aa)) enclose the Era-type G domain. Residues 12–19 (GRPNVGKS) form a G1 region. 12-19 (GRPNVGKS) provides a ligand contact to GTP. Residues 38–42 (QTTRN) are G2. A G3 region spans residues 59-62 (DTPG). Residues 59-63 (DTPGI) and 121-124 (NKID) contribute to the GTP site. The tract at residues 121-124 (NKID) is G4. Residues 150-152 (ISA) are G5. Residues 202-280 (TREEIPHSVA…FLETWVKVKK (79 aa)) form the KH type-2 domain.

This sequence belongs to the TRAFAC class TrmE-Era-EngA-EngB-Septin-like GTPase superfamily. Era GTPase family. In terms of assembly, monomer.

It is found in the cytoplasm. The protein resides in the cell membrane. Its function is as follows. An essential GTPase that binds both GDP and GTP, with rapid nucleotide exchange. Plays a role in 16S rRNA processing and 30S ribosomal subunit biogenesis and possibly also in cell cycle regulation and energy metabolism. The polypeptide is GTPase Era (Streptococcus pneumoniae (strain Hungary19A-6)).